Consider the following 280-residue polypeptide: Octanoyl-[GcvH]:protein N-octanoyltransferase (280 aa).

The BPL/LPL catalytic domain occupies 40-245; sequence QERGAVLRAW…VLSTVSLLQN (206 aa). Cys144 functions as the Acyl-thioester intermediate in the catalytic mechanism.

The protein belongs to the octanoyltransferase LipL family.

The enzyme catalyses N(6)-octanoyl-L-lysyl-[glycine-cleavage complex H protein] + L-lysyl-[lipoyl-carrier protein] = N(6)-octanoyl-L-lysyl-[lipoyl-carrier protein] + L-lysyl-[glycine-cleavage complex H protein]. It participates in protein modification; protein lipoylation via endogenous pathway; protein N(6)-(lipoyl)lysine from octanoyl-[acyl-carrier-protein]. Functionally, catalyzes the amidotransfer (transamidation) of the octanoyl moiety from octanoyl-GcvH to the lipoyl domain of the E2 subunit of lipoate-dependent enzymes. The sequence is that of Octanoyl-[GcvH]:protein N-octanoyltransferase from Exiguobacterium sp. (strain ATCC BAA-1283 / AT1b).